The chain runs to 428 residues: Lysophosphatidic acid phosphatase type 6 (428 aa).

Residues 1 to 32 (MITGVFSMRLWTPVGVLTSLAYCLHQRRVALA) constitute a mitochondrion transit peptide. Positions 58–168 (RHGARSPRKP…VFIRSTNIFR (111 aa)) are substrate binding. Residue histidine 59 is the Nucleophile of the active site. Aspartate 335 acts as the Proton donor in catalysis.

Belongs to the histidine acid phosphatase family. In terms of assembly, monomer.

Its subcellular location is the mitochondrion. It catalyses the reaction a phosphate monoester + H2O = an alcohol + phosphate. It carries out the reaction 1-(9Z-octadecenoyl)-sn-glycero-3-phosphate + H2O = 1-(9Z-octadecenoyl)-sn-glycerol + phosphate. Functionally, hydrolyzes lysophosphatidic acid (LPA) containing a medium length fatty acid chain to the corresponding monoacylglycerol. Has highest activity with lysophosphatidic acid containing myristate (C14:0), monounsaturated oleate (C18:1) or palmitate (C16:0), and lower activity with C18:0 and C6:0 lysophosphatidic acid. The sequence is that of Lysophosphatidic acid phosphatase type 6 (ACP6) from Pongo abelii (Sumatran orangutan).